Consider the following 438-residue polypeptide: ATP phosphoribosyltransferase regulatory subunit (438 aa).

This sequence belongs to the class-II aminoacyl-tRNA synthetase family. HisZ subfamily. As to quaternary structure, heteromultimer composed of HisG and HisZ subunits.

It localises to the cytoplasm. The protein operates within amino-acid biosynthesis; L-histidine biosynthesis; L-histidine from 5-phospho-alpha-D-ribose 1-diphosphate: step 1/9. Functionally, required for the first step of histidine biosynthesis. May allow the feedback regulation of ATP phosphoribosyltransferase activity by histidine. In Geobacter sulfurreducens (strain ATCC 51573 / DSM 12127 / PCA), this protein is ATP phosphoribosyltransferase regulatory subunit.